The following is a 356-amino-acid chain: Probable arabinogalactan endo-beta-1,4-galactanase A (356 aa).

The first 21 residues, 1–21 (MLGKTVLLPLLVLLCHSLASA), serve as a signal peptide directing secretion. An N-linked (GlcNAc...) asparagine glycan is attached at N133. The active-site Proton donor is E157. The active-site Nucleophile is E268.

It belongs to the glycosyl hydrolase 53 family.

The protein localises to the secreted. The enzyme catalyses The enzyme specifically hydrolyzes (1-&gt;4)-beta-D-galactosidic linkages in type I arabinogalactans.. Functionally, endogalactanase involved in the degradation of plant cell wall polysaccharides, and more particularly of hairy regions of pectin. The sequence is that of Probable arabinogalactan endo-beta-1,4-galactanase A (galA) from Aspergillus fumigatus (strain ATCC MYA-4609 / CBS 101355 / FGSC A1100 / Af293) (Neosartorya fumigata).